The sequence spans 150 residues: Developmental pluripotency-associated protein 3 (150 aa).

Residues 1–22 are compositionally biased toward basic and acidic residues; it reads MEEPSEKVDPMKDPETPQKKDE. The interval 1–32 is disordered; the sequence is MEEPSEKVDPMKDPETPQKKDEEDALDDTDVL. Residues 1-75 form a required for H3K9me2-binding region; the sequence is MEEPSEKVDP…VPVENKSEKI (75 aa). The tract at residues 76-150 is required to exclude TET3 from the maternal pronucleus; that stretch reads RREVQSAFPK…PSENAKIGKN (75 aa).

Expressed in the immature oocytes and in newborn ovaries. Subsequently detected in maturing oocytes and in preimplantation embryos. Expressed in pluripotent embryonic but not in differentiated somatic cells. Expressed in blastocysts, epiblasts, primordial germ cells, embryonic gonads and primitive spermatogonia. No expression is detected in adult testes.

The protein localises to the nucleus. It localises to the cytoplasm. In terms of biological role, primordial germ cell (PGCs)-specific protein involved in epigenetic chromatin reprogramming in the zygote following fertilization. In zygotes, DNA demethylation occurs selectively in the paternal pronucleus before the first cell division, while the adjacent maternal pronucleus and certain paternally-imprinted loci are protected from this process. Participates in protection of DNA methylation in the maternal pronucleus by preventing conversion of 5mC to 5hmC: specifically recognizes and binds histone H3 dimethylated at 'Lys-9' (H3K9me2) on maternal genome, and protects maternal genome from TET3-mediated conversion to 5hmC and subsequent DNA demethylation. Does not bind paternal chromatin, which is mainly packed into protamine and does not contain much H3K9me2 mark. Also protects imprinted loci that are marked with H3K9me2 in mature sperm from DNA demethylation in early embryogenesis. May be important for the totipotent/pluripotent states continuing through preimplantation development. Also involved in chromatin condensation in oocytogenesis. This chain is Developmental pluripotency-associated protein 3 (Dppa3), found in Mus musculus (Mouse).